The following is a 426-amino-acid chain: Tol-Pal system protein TolB (426 aa).

Positions 1-24 (MKLKSRFTSIIGVITLFFSQTVTA) are cleaved as a signal peptide.

It belongs to the TolB family. The Tol-Pal system is composed of five core proteins: the inner membrane proteins TolA, TolQ and TolR, the periplasmic protein TolB and the outer membrane protein Pal. They form a network linking the inner and outer membranes and the peptidoglycan layer.

Its subcellular location is the periplasm. Its function is as follows. Part of the Tol-Pal system, which plays a role in outer membrane invagination during cell division and is important for maintaining outer membrane integrity. This chain is Tol-Pal system protein TolB, found in Actinobacillus pleuropneumoniae serotype 3 (strain JL03).